Reading from the N-terminus, the 455-residue chain is Bifunctional protein GlmU (455 aa).

A pyrophosphorylase region spans residues 1–226 (MSLDIVILAA…AMEVQGANDR (226 aa)). Residues 8 to 11 (LAAG), Lys22, Gln73, 78 to 79 (GT), 99 to 101 (YGD), Gly136, Glu151, Asn166, and Asn224 each bind UDP-N-acetyl-alpha-D-glucosamine. Asp101 is a Mg(2+) binding site. Asn224 is a binding site for Mg(2+). Residues 227-247 (RQLSELERHYQLREGRRLMAQ) form a linker region. The interval 248 to 455 (GVTLRDPARF…WKRPEKIKKS (208 aa)) is N-acetyltransferase. Positions 330 and 348 each coordinate UDP-N-acetyl-alpha-D-glucosamine. Residue His360 is the Proton acceptor of the active site. 2 residues coordinate UDP-N-acetyl-alpha-D-glucosamine: Tyr363 and Asn374. Residues Ala377, 383-384 (NY), Ser402, Ala420, and Arg437 each bind acetyl-CoA.

In the N-terminal section; belongs to the N-acetylglucosamine-1-phosphate uridyltransferase family. This sequence in the C-terminal section; belongs to the transferase hexapeptide repeat family. Homotrimer. Mg(2+) serves as cofactor.

It localises to the cytoplasm. It catalyses the reaction alpha-D-glucosamine 1-phosphate + acetyl-CoA = N-acetyl-alpha-D-glucosamine 1-phosphate + CoA + H(+). The enzyme catalyses N-acetyl-alpha-D-glucosamine 1-phosphate + UTP + H(+) = UDP-N-acetyl-alpha-D-glucosamine + diphosphate. It participates in nucleotide-sugar biosynthesis; UDP-N-acetyl-alpha-D-glucosamine biosynthesis; N-acetyl-alpha-D-glucosamine 1-phosphate from alpha-D-glucosamine 6-phosphate (route II): step 2/2. The protein operates within nucleotide-sugar biosynthesis; UDP-N-acetyl-alpha-D-glucosamine biosynthesis; UDP-N-acetyl-alpha-D-glucosamine from N-acetyl-alpha-D-glucosamine 1-phosphate: step 1/1. It functions in the pathway bacterial outer membrane biogenesis; LPS lipid A biosynthesis. Functionally, catalyzes the last two sequential reactions in the de novo biosynthetic pathway for UDP-N-acetylglucosamine (UDP-GlcNAc). The C-terminal domain catalyzes the transfer of acetyl group from acetyl coenzyme A to glucosamine-1-phosphate (GlcN-1-P) to produce N-acetylglucosamine-1-phosphate (GlcNAc-1-P), which is converted into UDP-GlcNAc by the transfer of uridine 5-monophosphate (from uridine 5-triphosphate), a reaction catalyzed by the N-terminal domain. The polypeptide is Bifunctional protein GlmU (Pseudomonas putida (strain ATCC 700007 / DSM 6899 / JCM 31910 / BCRC 17059 / LMG 24140 / F1)).